Reading from the N-terminus, the 340-residue chain is Lipopolysaccharide core biosynthesis glycosyltransferase LpsE (340 aa).

It belongs to the glycosyltransferase group 1 family. Glycosyltransferase 4 subfamily.

It functions in the pathway bacterial outer membrane biogenesis; LPS core biosynthesis. The protein is Lipopolysaccharide core biosynthesis glycosyltransferase LpsE (lpsE) of Rhizobium meliloti (strain 1021) (Ensifer meliloti).